Here is a 543-residue protein sequence, read N- to C-terminus: Carotenoid 9,10(9',10')-cleavage dioxygenase 1 (543 aa).

Histidine 224, histidine 272, histidine 338, and histidine 528 together coordinate Fe cation.

It belongs to the carotenoid oxygenase family. As to quaternary structure, homodimer. It depends on Fe(2+) as a cofactor.

The catalysed reaction is all-trans-zeaxanthin + 2 O2 = 4,9-dimethyldodeca-2,4,6,8,10-pentaenedial + 2 (3R)-hydroxy-beta-ionone. Its function is as follows. Cleaves a variety of carotenoids at the 9-10 and 9'-10' double bonds. Probably not involved in abscisic acid biosynthesis. The sequence is that of Carotenoid 9,10(9',10')-cleavage dioxygenase 1 (CCD1) from Phaseolus vulgaris (Kidney bean).